The following is a 124-amino-acid chain: Small ribosomal subunit protein uS12 (124 aa).

D89 is subject to 3-methylthioaspartic acid. The residue at position 108 (K108) is an N6-acetyllysine.

The protein belongs to the universal ribosomal protein uS12 family. As to quaternary structure, part of the 30S ribosomal subunit. Contacts proteins S8 and S17. May interact with IF1 in the 30S initiation complex.

With S4 and S5 plays an important role in translational accuracy. In terms of biological role, interacts with and stabilizes bases of the 16S rRNA that are involved in tRNA selection in the A site and with the mRNA backbone. Located at the interface of the 30S and 50S subunits, it traverses the body of the 30S subunit contacting proteins on the other side and probably holding the rRNA structure together. The combined cluster of proteins S8, S12 and S17 appears to hold together the shoulder and platform of the 30S subunit. The sequence is that of Small ribosomal subunit protein uS12 from Escherichia coli O6:K15:H31 (strain 536 / UPEC).